Here is a 133-residue protein sequence, read N- to C-terminus: Small ribosomal subunit protein uS8 (133 aa).

The protein belongs to the universal ribosomal protein uS8 family. In terms of assembly, part of the 30S ribosomal subunit. Contacts proteins S5 and S12.

In terms of biological role, one of the primary rRNA binding proteins, it binds directly to 16S rRNA central domain where it helps coordinate assembly of the platform of the 30S subunit. The sequence is that of Small ribosomal subunit protein uS8 from Rhodopirellula baltica (strain DSM 10527 / NCIMB 13988 / SH1).